Reading from the N-terminus, the 307-residue chain is Sporulation sigma-E factor-processing peptidase (307 aa).

A run of 5 helical transmembrane segments spans residues 7–27 (LIWMLNFGLDTILLMLCAVVL), 36–56 (LLLGGFIGSLIVLLMFTPFSH), 57–77 (LMVHPAIKILFSFFMVLMTFG), 89–109 (LTFYFATFVVGGGLMGVHFLF), and 127–147 (FGDPISWIFVLIGFPLLSYFS). The active site involves D183.

This sequence belongs to the peptidase U4 family. As to quaternary structure, self-associates. Interacts with SigE. Interacts with SpoIIR.

It localises to the cell membrane. Its function is as follows. Probable aspartic protease that is responsible for the proteolytic cleavage of the RNA polymerase sigma E factor (SigE/spoIIGB) to yield the active peptide in the mother cell during sporulation. Responds to a signal from the forespore that is triggered by the extracellular signal protein SpoIIR. This is Sporulation sigma-E factor-processing peptidase from Priestia megaterium (strain ATCC 12872 / QMB1551) (Bacillus megaterium).